Consider the following 185-residue polypeptide: Ribose 1,5-bisphosphate phosphokinase PhnN (185 aa).

Residue 10-17 participates in ATP binding; it reads GPSGSGKD.

The protein belongs to the ribose 1,5-bisphosphokinase family.

The catalysed reaction is alpha-D-ribose 1,5-bisphosphate + ATP = 5-phospho-alpha-D-ribose 1-diphosphate + ADP. It participates in metabolic intermediate biosynthesis; 5-phospho-alpha-D-ribose 1-diphosphate biosynthesis; 5-phospho-alpha-D-ribose 1-diphosphate from D-ribose 5-phosphate (route II): step 3/3. Catalyzes the phosphorylation of ribose 1,5-bisphosphate to 5-phospho-D-ribosyl alpha-1-diphosphate (PRPP). Accepts ATP but not GTP as a phosphoryl donor, and uses ribose 1,5-bisphosphate but not ribose, ribose 1-phosphate, or ribose 5-phosphate as a phosphoryl acceptor. The sequence is that of Ribose 1,5-bisphosphate phosphokinase PhnN (phnN) from Escherichia coli (strain K12).